The following is a 425-amino-acid chain: Adenylyltransferase and sulfurtransferase MOCS3 (425 aa).

ATP contacts are provided by residues Gly-47, Asp-68, 75–79, Lys-92, and 136–137; these read SNLHR and DN. Zn(2+)-binding residues include Cys-177 and Cys-180. Cys-194 serves as the catalytic Glycyl thioester intermediate; for adenylyltransferase activity. Cys-253 and Cys-256 together coordinate Zn(2+). Residues 305-423 enclose the Rhodanese domain; the sequence is NNNNHLLIDV…WNESIDDSFP (119 aa). The Cysteine persulfide intermediate; for sulfurtransferase activity role is filled by Cys-378.

The protein in the N-terminal section; belongs to the HesA/MoeB/ThiF family. UBA4 subfamily. Requires Zn(2+) as cofactor.

Its subcellular location is the cytoplasm. The protein resides in the cytosol. It carries out the reaction [molybdopterin-synthase sulfur-carrier protein]-C-terminal Gly-Gly + ATP + H(+) = [molybdopterin-synthase sulfur-carrier protein]-C-terminal Gly-Gly-AMP + diphosphate. The catalysed reaction is [molybdopterin-synthase sulfur-carrier protein]-C-terminal Gly-Gly-AMP + S-sulfanyl-L-cysteinyl-[cysteine desulfurase] + AH2 = [molybdopterin-synthase sulfur-carrier protein]-C-terminal-Gly-aminoethanethioate + L-cysteinyl-[cysteine desulfurase] + A + AMP + 2 H(+). The protein operates within tRNA modification; 5-methoxycarbonylmethyl-2-thiouridine-tRNA biosynthesis. It participates in cofactor biosynthesis; molybdopterin biosynthesis. Plays a central role in 2-thiolation of mcm(5)S(2)U at tRNA wobble positions of cytosolic tRNA(Lys), tRNA(Glu) and tRNA(Gln). Also essential during biosynthesis of the molybdenum cofactor. Acts by mediating the C-terminal thiocarboxylation of sulfur carriers urm1 and mocs2a. Its N-terminus first activates urm1 and mocs2a as acyl-adenylates (-COAMP), then the persulfide sulfur on the catalytic cysteine is transferred to urm1 and mocs2a to form thiocarboxylation (-COSH) of their C-terminus. The reaction probably involves hydrogen sulfide that is generated from the persulfide intermediate and that acts as a nucleophile towards urm1 and mocs2a. Subsequently, a transient disulfide bond is formed. Does not use thiosulfate as sulfur donor; nfs1 probably acting as a sulfur donor for thiocarboxylation reactions. The chain is Adenylyltransferase and sulfurtransferase MOCS3 (mocs3) from Dictyostelium discoideum (Social amoeba).